The primary structure comprises 598 residues: Probable pectinesterase/pectinesterase inhibitor 34 (598 aa).

Residues 1–40 (MGYERLGPSGATGSVTTSTTTAPILNQVSTSEQPENNNRR) are disordered. The span at 7-23 (GPSGATGSVTTSTTTAP) shows a compositional bias: low complexity. Over residues 24-36 (ILNQVSTSEQPEN) the composition is skewed to polar residues. Residues 46-66 (VVSSIVLAISLILAAAIFAGV) traverse the membrane as a helical segment. Positions 81 to 232 (RKPSQAISKA…SELVSNCLAI (152 aa)) are pectinesterase inhibitor 34. Residues 284-582 (DIIVSKDGNG…FTVAEFIYGS (299 aa)) are pectinesterase 34. Positions 360 and 390 each coordinate substrate. Asp-413 serves as the catalytic Proton donor; for pectinesterase activity. A disulfide bond links Cys-427 and Cys-447. The active-site Nucleophile; for pectinesterase activity is Asp-434. The substrate site is built by Arg-502 and Trp-504.

The protein in the N-terminal section; belongs to the PMEI family. This sequence in the C-terminal section; belongs to the pectinesterase family. As to expression, expressed in siliques.

The protein resides in the membrane. It catalyses the reaction [(1-&gt;4)-alpha-D-galacturonosyl methyl ester](n) + n H2O = [(1-&gt;4)-alpha-D-galacturonosyl](n) + n methanol + n H(+). Its pathway is glycan metabolism; pectin degradation; 2-dehydro-3-deoxy-D-gluconate from pectin: step 1/5. Its function is as follows. Acts in the modification of cell walls via demethylesterification of cell wall pectin. The sequence is that of Probable pectinesterase/pectinesterase inhibitor 34 (PME34) from Arabidopsis thaliana (Mouse-ear cress).